The chain runs to 511 residues: Cytochrome P450 monooxygenase prhD (511 aa).

N-linked (GlcNAc...) asparagine glycosylation occurs at Asn7. A helical transmembrane segment spans residues Gly10 to Leu30. Cys444 is a binding site for heme. Residue Asn502 is glycosylated (N-linked (GlcNAc...) asparagine).

It belongs to the cytochrome P450 family. Requires heme as cofactor.

The protein localises to the membrane. It functions in the pathway secondary metabolite biosynthesis; terpenoid biosynthesis. Its function is as follows. Cytochrome P450 monooxygenase; part of the gene cluster that mediates the biosynthesis of paraherquonin, a meroterpenoid with a unique, highly congested hexacyclic molecular architecture. The first step of the pathway is the synthesis of 3,5-dimethylorsellinic acid (DMOA) by the polyketide synthase prhL. Synthesis of DMOA is followed by farnesylation by the prenyltransferase prhE, methylesterification by the methyl-transferase prhM, epoxidation of the prenyl chain by the flavin-dependent monooxygenase prhF, and cyclization of the farnesyl moiety by the terpene cyclase prhH, to yield the tetracyclic intermediate, protoaustinoid A. The short chain dehydrogenase prhI then oxidizes the C-3 alcohol group of the terpene cyclase product to transform protoaustinoid A into protoaustinoid B. The FAD-binding monooxygenase prhJ catalyzes the oxidation of protoaustinoid B into preaustinoid A which is further oxidized into preaustinoid A1 by FAD-binding monooxygenase phrK. Finally, prhA leads to berkeleydione via the berkeleyone B intermediate. PrhA is a multifunctional dioxygenase that first desaturates at C5-C6 to form berkeleyone B, followed by rearrangement of the A/B-ring to form the cycloheptadiene moiety in berkeleydione. Berkeleydione serves as the key intermediate for the biosynthesis of paraherquonin as well as many other meroterpenoids. The cytochrome P450 monooxygenases prhB, prhD, and prhN, as well as the isomerase prhC, are probably involved in the late stage of paraherquonin biosynthesis, after the production of berkeleydione. Especially prhC might be a multifunctional enzyme that catalyzes the D-ring expansion via intramolecular methoxy rearrangement, as well as the hydrolysis of the expanded D-ring. The sequence is that of Cytochrome P450 monooxygenase prhD from Penicillium brasilianum.